The chain runs to 217 residues: Probable transaldolase (217 aa).

Catalysis depends on Lys-83, which acts as the Schiff-base intermediate with substrate.

This sequence belongs to the transaldolase family. Type 3B subfamily.

Its subcellular location is the cytoplasm. The catalysed reaction is D-sedoheptulose 7-phosphate + D-glyceraldehyde 3-phosphate = D-erythrose 4-phosphate + beta-D-fructose 6-phosphate. Its pathway is carbohydrate degradation; pentose phosphate pathway; D-glyceraldehyde 3-phosphate and beta-D-fructose 6-phosphate from D-ribose 5-phosphate and D-xylulose 5-phosphate (non-oxidative stage): step 2/3. Its function is as follows. Transaldolase is important for the balance of metabolites in the pentose-phosphate pathway. In Rhizobium meliloti (strain 1021) (Ensifer meliloti), this protein is Probable transaldolase.